The chain runs to 359 residues: MSTTIRASQLASSISPKTEEKQPSVFDIIAQENLATSIRPALQHLVKYLAFFKPKTFLSVHRNFDEYYIIFDLILQNHYLRNYGASFTENFYSMKRIASGTGNPPNDGRERIMSLITLVGWPYVENKLNQLYDRLKEVYECRSWSSINGMKAKCQKMFVIIWPYIKTALKAVKSALQLAYILNRSSIHSPWLYFSGVILKHLTPEDLEAFNAVPLHLQTGYQISRGTLNEHIHLRFFNRIWRFILGLPGIVSRLFAYGLFFVQFLDYMYNTDLAKLTKTGLDGAIPSPPHKMIISESEILSLDTNKCPICLKKRVNDTALFVSGYVFCYTCINQYVNTYNKCPVTGCPANVQHLIRLFV.

The Peroxisomal matrix portion of the chain corresponds to 1 to 24 (MSTTIRASQLASSISPKTEEKQPS). Residues 25-52 (VFDIIAQENLATSIRPALQHLVKYLAFF) form a helical membrane-spanning segment. Topologically, residues 53 to 56 (KPKT) are cytoplasmic. The helical transmembrane segment at 57 to 81 (FLSVHRNFDEYYIIFDLILQNHYLR) threads the bilayer. At 82–106 (NYGASFTENFYSMKRIASGTGNPPN) the chain is on the peroxisomal matrix side. A helical transmembrane segment spans residues 107–128 (DGRERIMSLITLVGWPYVENKL). The Cytoplasmic portion of the chain corresponds to 129 to 133 (NQLYD). A helical membrane pass occupies residues 134-184 (RLKEVYECRSWSSINGMKAKCQKMFVIIWPYIKTALKAVKSALQLAYILNR). At 185–253 (SSIHSPWLYF…ILGLPGIVSR (69 aa)) the chain is on the peroxisomal matrix side. Residues 254 to 281 (LFAYGLFFVQFLDYMYNTDLAKLTKTGL) form a helical membrane-spanning segment. The Cytoplasmic portion of the chain corresponds to 282-359 (DGAIPSPPHK…NVQHLIRLFV (78 aa)). Zn(2+)-binding residues include Cys-307, Cys-310, Cys-328, and Cys-331. The RING-type; degenerate zinc finger occupies 307–346 (CPICLKKRVNDTALFVSGYVFCYTCINQYVNTYNKCPVTG).

Belongs to the pex2/pex10/pex12 family. Component of the PEX2-PEX10-PEX12 retrotranslocation channel.

It is found in the peroxisome membrane. It participates in protein modification; protein ubiquitination. Component of a retrotranslocation channel required for peroxisome organization by mediating export of the PEX5/prx-5 receptor from peroxisomes to the cytosol, thereby promoting PEX5/prx-5 recycling. The retrotranslocation channel is composed of PEX2/prx-2, PEX10/prx-10 and PEX12/prx-12; each subunit contributing transmembrane segments that coassemble into an open channel that specifically allows the passage of PEX5/prx-5 through the peroxisomal membrane. PEX12/prx-12 also regulates PEX5/prx-5 recycling by activating the E3 ubiquitin-protein ligase activity of PEX10/prx-10. When PEX5 recycling is compromised, PEX12/prx-12 stimulates PEX10-mediated polyubiquitination of PEX5/prx-5, leading to its subsequent degradation. This chain is Peroxisome assembly protein 12 (prx-12), found in Caenorhabditis elegans.